Reading from the N-terminus, the 285-residue chain is 2,4-didehydro-3-deoxy-L-rhamnonate hydrolase (285 aa).

Leu-73 serves as a coordination point for pyruvate. Residues Glu-119, Glu-121, and Asp-150 each coordinate Mg(2+). Pyruvate-binding residues include Lys-168 and Thr-238.

This sequence belongs to the FAH family. Homodimer. Mg(2+) serves as cofactor.

The enzyme catalyses 2,4-didehydro-3-deoxy-L-rhamnonate + H2O = (S)-lactate + pyruvate + H(+). It functions in the pathway carbohydrate degradation; L-rhamnose degradation. In terms of biological role, hydrolase that catalyzes the hydrolysis of 2,4-didehydro-3-deoxy-L-rhamnonate to pyruvate and L-lactate. Can also hydrolyze L-2,4-diketo-3-deoxylyxonate and L-2,4-diketo-3-deoxymannonate. In vitro can also use acylpyruvates such as acetylpyruvate and trimethylacetopyruvate. Catalyzes the fifth (last) step in an alternative pathway for rhamnose utilization that does not involve phosphorylated intermediates. The protein is 2,4-didehydro-3-deoxy-L-rhamnonate hydrolase of Sphingomonas sp. (strain SKA58).